Reading from the N-terminus, the 837-residue chain is WW domain-containing protein tag-325 (837 aa).

The span at 1–11 (MTTAVQPSDTT) shows a compositional bias: polar residues. The interval 1-66 (MTTAVQPSDT…SNGQNYADDP (66 aa)) is disordered. Over residues 33 to 43 (SESAESSSSSS) the composition is skewed to low complexity. The span at 44 to 61 (QTNVSAANTLPRESNGQN) shows a compositional bias: polar residues. One can recognise a WW domain in the interval 96–129 (RDLLNGWFEYETDVGRTFFFNKETGKSQWIPPRF). Residues 150-161 (TCSFQGSSTSSS) show a composition bias toward low complexity. Disordered stretches follow at residues 150 to 181 (TCSF…RKSQ), 194 to 257 (DDVD…STAS), 338 to 403 (TTSS…EPAE), 548 to 574 (MRRR…EPRP), and 778 to 800 (KNKK…TPVQ). Over residues 162–181 (EEQKENKMRESLADDDRKSQ) the composition is skewed to basic and acidic residues. Over residues 247-257 (PTSSRKASTAS) the composition is skewed to polar residues. Residues 371-403 (RCEERRGSGDGREPVRTIRCGDLERSENDEPAE) are compositionally biased toward basic and acidic residues. A PH domain is found at 386–505 (RTIRCGDLER…WYKSLEEVVA (120 aa)). Polar residues predominate over residues 556–569 (SQSAIETVSTSVST). The 218-residue stretch at 610 to 827 (STLSAICQHE…YLLESANKFD (218 aa)) folds into the Rho-GAP domain. Positions 778 to 788 (KNKKAGKKAKP) are enriched in basic residues.

This chain is WW domain-containing protein tag-325 (tag-325), found in Caenorhabditis elegans.